The following is a 146-amino-acid chain: Hemoglobin subunit beta (146 aa).

One can recognise a Globin domain in the interval 2–146; sequence HWTADEKQLI…VAHALALGYH (145 aa). Residues H63 and H92 each coordinate heme b.

It belongs to the globin family. Heterotetramer of two alpha chains and two beta chains. Red blood cells.

Its function is as follows. Involved in oxygen transport from the lung to the various peripheral tissues. This Chrysemys picta bellii (Western painted turtle) protein is Hemoglobin subunit beta (HBB).